We begin with the raw amino-acid sequence, 531 residues long: Cytochrome P450 monooxygenase peniB (531 aa).

A helical transmembrane segment spans residues 30 to 48 (ILSIAAVVFLGYLLLRPLF). Residue cysteine 445 coordinates heme.

It belongs to the cytochrome P450 family. Heme serves as cofactor.

It localises to the membrane. The enzyme catalyses silphinene-15-oate + 2 reduced [NADPH--hemoprotein reductase] + 2 O2 = gamma-lactone-2-keto[5.5.5.5]fenestrane + 2 oxidized [NADPH--hemoprotein reductase] + 3 H2O + H(+). The protein operates within secondary metabolite biosynthesis; terpenoid biosynthesis. Cytochrome P450 monooxygenase; part of the gene cluster that mediates the biosynthesis of penifulvin A, a potent insecticidal sesquiterpene that features a [5.5.5.6]dioxafenestrane ring. Within the pathway, peniB catalyzes the multi-step oxidation of silphinene to synthesize gamma-lactone-2-keto[5.5.5.5]fenestrane, including oxidation of the C15 methylgroup in silphinene to form silphinene-15-oic acid, activationof the C1-C2 double bond to form the gamma-lactone-2-hydroxy[5.5.5.5]fenestrane, and dehydrogenation of the hydroxy group at C2 of gamma-lactone-2-hydroxy[5.5.5.5]fenestrane to generate gamma-lactone-2-keto[5.5.5.5]fenestrane. The first step of the pathway is performed by the sesquiterpene cyclase peniA that generates the angular triquinane scaffold silphinene via cyclization of the linear farnesyl pyrophosphate (FPP). The cytochrome P450 monooxygenase peniB and the flavin-dependent monooxygenase peniC then catalyze a series of oxidation reactions to transform silphinene into penifulvin A. The polypeptide is Cytochrome P450 monooxygenase peniB (Penicillium patulum (Penicillium griseofulvum)).